A 1028-amino-acid polypeptide reads, in one-letter code: Contactin-6 (1028 aa).

Residues 1 to 19 form the signal peptide; the sequence is MRLLWKLVILLPLINSCAG. Ig-like C2-type domains follow at residues 32-117, 122-208, 227-308, 318-402, 408-502, and 500-587; these read PQDV…AKLQ, EDFE…RSVQ, PKIE…RNLA, PEWE…AELR, PDFS…RTII, and TIIT…ERLS. Intrachain disulfides connect Cys50–Cys100, Cys144–Cys196, Cys249–Cys297, Cys339–Cys386, Cys431–Cys479, and Cys521–Cys577. N-linked (GlcNAc...) asparagine glycans are attached at residues Asn65 and Asn193. Asn368, Asn377, and Asn468 each carry an N-linked (GlcNAc...) asparagine glycan. Fibronectin type-III domains lie at 600–698, 703–800, 805–901, and 902–996; these read PPED…TKAS, APGN…SGED, APRG…TKKS, and PPSQ…KMSS. N-linked (GlcNAc...) asparagine glycans are attached at residues Asn659, Asn765, Asn860, and Asn865. A Phosphotyrosine modification is found at Tyr882. N-linked (GlcNAc...) asparagine glycosylation is found at Asn895, Asn931, Asn956, and Asn957. Ser999 carries the GPI-anchor amidated serine lipid modification. The propeptide at 1000–1028 is removed in mature form; sequence TGVQISKPSTQSLSMVGVFYCFAIHPLSR.

It belongs to the immunoglobulin superfamily. Contactin family. Interacts with PTPRG. As to expression, expressed in brain. In brain, it is preferentially expressed in the accessory olfactory bulb, layers II/III and V of the cerebral cortex, piriform cortex, anterior thalamic nuclei, locus coeruleus of the pons and mesencephalic trigeminal nucleus and in Purkinje cells of the cerebellum.

It is found in the cell membrane. In terms of biological role, contactins mediate cell surface interactions during nervous system development. Participates in oligodendrocytes generation by acting as a ligand of NOTCH1. Its association with NOTCH1 promotes NOTCH1 activation through the released notch intracellular domain (NICD) and subsequent translocation to the nucleus. Involved in motor coordination. The protein is Contactin-6 (Cntn6) of Mus musculus (Mouse).